Reading from the N-terminus, the 237-residue chain is Ribose-5-phosphate isomerase A (237 aa).

Substrate contacts are provided by residues 30–33 (SGST), 87–90 (DGAD), and 100–103 (KGGG). Glutamate 109 serves as the catalytic Proton acceptor. Lysine 127 contributes to the substrate binding site.

It belongs to the ribose 5-phosphate isomerase family. In terms of assembly, homodimer.

The catalysed reaction is aldehydo-D-ribose 5-phosphate = D-ribulose 5-phosphate. The protein operates within carbohydrate degradation; pentose phosphate pathway; D-ribose 5-phosphate from D-ribulose 5-phosphate (non-oxidative stage): step 1/1. Its function is as follows. Catalyzes the reversible conversion of ribose-5-phosphate to ribulose 5-phosphate. The polypeptide is Ribose-5-phosphate isomerase A (Prochlorococcus marinus (strain MIT 9211)).